Here is a 614-residue protein sequence, read N- to C-terminus: uncharacterized protein (614 aa).

The next 2 helical transmembrane spans lie at 494–516 and 552–574; these read VAYWSFGALCIAVPIALILGSTL and LLIGTGVAVGVAVILSINFIVHA. The disordered stretch occupies residues 588-614; sequence AVRPRADKDIQTLTHRDEAEEDQEEDS. Positions 591 to 605 are enriched in basic and acidic residues; sequence PRADKDIQTLTHRDE.

The protein localises to the cell membrane. This is an uncharacterized protein from Treponema pallidum (strain Nichols).